We begin with the raw amino-acid sequence, 57 residues long: Small ribosomal subunit protein bS21 (57 aa).

It belongs to the bacterial ribosomal protein bS21 family.

This is Small ribosomal subunit protein bS21 from Phytoplasma australiense.